A 643-amino-acid polypeptide reads, in one-letter code: Threonine--tRNA ligase (643 aa).

Residues 1–61 (MPIITLPDGA…SVNANINIIT (61 aa)) form the TGS domain. The tract at residues 242–533 (DHRKIGKKLD…LIEEYEGKFP (292 aa)) is catalytic. Residues Cys-333, His-384, and His-510 each coordinate Zn(2+).

Belongs to the class-II aminoacyl-tRNA synthetase family. In terms of assembly, homodimer. Zn(2+) is required as a cofactor.

The protein resides in the cytoplasm. It catalyses the reaction tRNA(Thr) + L-threonine + ATP = L-threonyl-tRNA(Thr) + AMP + diphosphate + H(+). In terms of biological role, catalyzes the attachment of threonine to tRNA(Thr) in a two-step reaction: L-threonine is first activated by ATP to form Thr-AMP and then transferred to the acceptor end of tRNA(Thr). Also edits incorrectly charged L-seryl-tRNA(Thr). This is Threonine--tRNA ligase from Prochlorococcus marinus (strain SARG / CCMP1375 / SS120).